A 564-amino-acid polypeptide reads, in one-letter code: Dihydroxy-acid dehydratase (564 aa).

Asp80 provides a ligand contact to Mg(2+). Cys121 is a [2Fe-2S] cluster binding site. Residues Asp122 and Lys123 each contribute to the Mg(2+) site. Lys123 carries the post-translational modification N6-carboxylysine. Position 194 (Cys194) interacts with [2Fe-2S] cluster. Glu447 contributes to the Mg(2+) binding site. Ser473 (proton acceptor) is an active-site residue.

This sequence belongs to the IlvD/Edd family. As to quaternary structure, homodimer. [2Fe-2S] cluster is required as a cofactor. Requires Mg(2+) as cofactor.

The catalysed reaction is (2R)-2,3-dihydroxy-3-methylbutanoate = 3-methyl-2-oxobutanoate + H2O. It catalyses the reaction (2R,3R)-2,3-dihydroxy-3-methylpentanoate = (S)-3-methyl-2-oxopentanoate + H2O. It functions in the pathway amino-acid biosynthesis; L-isoleucine biosynthesis; L-isoleucine from 2-oxobutanoate: step 3/4. It participates in amino-acid biosynthesis; L-valine biosynthesis; L-valine from pyruvate: step 3/4. Functionally, functions in the biosynthesis of branched-chain amino acids. Catalyzes the dehydration of (2R,3R)-2,3-dihydroxy-3-methylpentanoate (2,3-dihydroxy-3-methylvalerate) into 2-oxo-3-methylpentanoate (2-oxo-3-methylvalerate) and of (2R)-2,3-dihydroxy-3-methylbutanoate (2,3-dihydroxyisovalerate) into 2-oxo-3-methylbutanoate (2-oxoisovalerate), the penultimate precursor to L-isoleucine and L-valine, respectively. The polypeptide is Dihydroxy-acid dehydratase (Listeria innocua serovar 6a (strain ATCC BAA-680 / CLIP 11262)).